A 331-amino-acid chain; its full sequence is DNA-directed RNA polymerase subunit alpha (331 aa).

Residues 1–223 form an alpha N-terminal domain (alpha-NTD) region; the sequence is MDQKRPQLKA…DELTVFGNVE (223 aa). The alpha C-terminal domain (alpha-CTD) stretch occupies residues 260-331; that stretch reads PYPADLDTPR…LAQFGLALRD (72 aa).

This sequence belongs to the RNA polymerase alpha chain family. Homodimer. The RNAP catalytic core consists of 2 alpha, 1 beta, 1 beta' and 1 omega subunit. When a sigma factor is associated with the core the holoenzyme is formed, which can initiate transcription.

The catalysed reaction is RNA(n) + a ribonucleoside 5'-triphosphate = RNA(n+1) + diphosphate. Its function is as follows. DNA-dependent RNA polymerase catalyzes the transcription of DNA into RNA using the four ribonucleoside triphosphates as substrates. The protein is DNA-directed RNA polymerase subunit alpha of Deinococcus geothermalis (strain DSM 11300 / CIP 105573 / AG-3a).